The chain runs to 461 residues: Acetylcholine receptor subunit alpha (461 aa).

Positions 1–24 (MILCSYWHVGLVLLLFSCCGLVLG) are cleaved as a signal peptide. Residues 25–234 (SEHETRLVAN…ITYHFIMQRI (210 aa)) lie on the Extracellular side of the membrane. Disulfide bonds link Cys152/Cys166 and Cys216/Cys217. Residue Asn165 is glycosylated (N-linked (GlcNAc...) asparagine). Transmembrane regions (helical) follow at residues 235 to 259 (PLYF…VFYL), 267 to 285 (MTLS…LVIV), and 301 to 320 (YMLF…VVVI). The Cytoplasmic segment spans residues 321–432 (NTHHRSPSTH…WKYVAMVIDH (112 aa)). Residues 433–451 (ILLCVFMLICIIGTVSVFA) traverse the membrane as a helical segment.

This sequence belongs to the ligand-gated ion channel (TC 1.A.9) family. Acetylcholine receptor (TC 1.A.9.1) subfamily. Alpha-1/CHRNA1 sub-subfamily. Pentamer of two alpha chains, and one each of the beta, delta, and gamma chains.

The protein resides in the postsynaptic cell membrane. Its subcellular location is the cell membrane. The catalysed reaction is K(+)(in) = K(+)(out). The enzyme catalyses Na(+)(in) = Na(+)(out). In terms of biological role, upon acetylcholine binding, the AChR responds by an extensive change in conformation that affects all subunits and leads to opening of an ion-conducting channel across the plasma membrane. This is Acetylcholine receptor subunit alpha (CHRNA1) from Tetronarce californica (Pacific electric ray).